Consider the following 163-residue polypeptide: Augmin complex subunit wac (163 aa).

The stretch at Glu86–Leu115 forms a coiled coil.

In terms of assembly, component of the augmin complex composed of dgt2, dgt3, dgt4, dgt5, dgt6, msd1, msd5 and wac. The complex interacts directly or indirectly with microtubules and is required for centrosome-independent generation of spindle microtubules. wac interacts directly (via coiled coil) with dgt2. In adult females, detected only in the abdomen with no expression in the head or thorax (at protein level).

The protein localises to the cytoplasm. It localises to the cytoskeleton. It is found in the spindle. The protein resides in the spindle pole. Functionally, as part of the augmin complex, plays a role in centrosome-independent generation of spindle microtubules. The complex is required for mitotic spindle assembly through its involvement in localizing gamma-tubulin to spindle microtubules. wac is dispensable for somatic mitosis and for assembly of spindle microtubules in oocytes during female meiosis but is required during female meiosis for chromosome alignment and segregation. It is required for microtubule assembly near spindle poles in oocytes. It is also required for acentrosomal microtubule nucleation and meiotic spindle formation during male meiosis. wac binds to microtubules in vitro. This is Augmin complex subunit wac from Drosophila melanogaster (Fruit fly).